A 201-amino-acid chain; its full sequence is ATP-dependent Clp protease proteolytic subunit (201 aa).

The Nucleophile role is filled by S98. H123 is a catalytic residue.

Belongs to the peptidase S14 family. As to quaternary structure, fourteen ClpP subunits assemble into 2 heptameric rings which stack back to back to give a disk-like structure with a central cavity, resembling the structure of eukaryotic proteasomes.

The protein resides in the cytoplasm. The enzyme catalyses Hydrolysis of proteins to small peptides in the presence of ATP and magnesium. alpha-casein is the usual test substrate. In the absence of ATP, only oligopeptides shorter than five residues are hydrolyzed (such as succinyl-Leu-Tyr-|-NHMec, and Leu-Tyr-Leu-|-Tyr-Trp, in which cleavage of the -Tyr-|-Leu- and -Tyr-|-Trp bonds also occurs).. In terms of biological role, cleaves peptides in various proteins in a process that requires ATP hydrolysis. Has a chymotrypsin-like activity. Plays a major role in the degradation of misfolded proteins. This is ATP-dependent Clp protease proteolytic subunit from Neorickettsia sennetsu (strain ATCC VR-367 / Miyayama) (Ehrlichia sennetsu).